We begin with the raw amino-acid sequence, 207 residues long: MRHGLLALICWLCCVVAHSEMLNVEQSGLFRAWFVRIAQEQLRQGPSPRWYQQDCAGLVRFAANETLKVHDSKWLKSNGLSSQYLPPEMTLTPEQRQLAQNWNQGNGKTGPYVTAINLIQYNSQFIGQDINQALPGDMIFFDQGDAQHLMVWMGRYVIYHTGSATKTDNGMRAVSLQQLMTWKDTRWIPNDSNPNFIGIYRLNFLAR.

An N-terminal signal peptide occupies residues 1–19 (MRHGLLALICWLCCVVAHS).

The protein to P.aeruginosa PA4490 and T.maritima TM0986.

This is an uncharacterized protein from Escherichia coli (strain K12).